A 406-amino-acid chain; its full sequence is Lysosome-associated membrane glycoprotein 1 (406 aa).

A signal peptide spans 1–24; it reads MAAPGARRPLLLLLLAGLAHGASA. A first lumenal domain region spans residues 25–188; sequence LFEVKNNGTT…SKEETHCTQD (164 aa). Topologically, residues 25–370 are lumenal; sequence LFEVKNNGTT…VEECVQDGNN (346 aa). Residues asparagine 31, asparagine 52, asparagine 58, asparagine 70, asparagine 78, asparagine 97, asparagine 101, asparagine 115, asparagine 159, and asparagine 177 are each glycosylated (N-linked (GlcNAc...) asparagine). Residues cysteine 35 and cysteine 74 are joined by a disulfide bond. Residues cysteine 149 and cysteine 185 are joined by a disulfide bond. Positions 180-207 are disordered; it reads KEETHCTQDGPSPTTGPPSPSPPLVPTN. The hinge stretch occupies residues 189 to 218; sequence GPSPTTGPPSPSPPLVPTNPTVSKYNVTGN. Pro residues predominate over residues 193-205; the sequence is TTGPPSPSPPLVP. N-linked (GlcNAc...) asparagine glycosylation is found at asparagine 214, asparagine 219, asparagine 232, and asparagine 240. The interval 219–370 is second lumenal domain; the sequence is NGTCLLASMA…VEECVQDGNN (152 aa). Cysteines 222 and 259 form a disulfide. N-linked (GlcNAc...) (high mannose) asparagine glycosylation occurs at asparagine 252. N-linked (GlcNAc...) asparagine glycosylation is found at asparagine 282, asparagine 296, and asparagine 311. Cysteine 327 and cysteine 364 are oxidised to a cystine. Residues 371–394 traverse the membrane as a helical segment; that stretch reads MLIPIAVGGALAGLVLIVLIAYLI. The Cytoplasmic portion of the chain corresponds to 395–406; the sequence is GRKRSHAGYQTI.

It belongs to the LAMP family. As to quaternary structure, interacts with ABCB9; this interaction strongly stabilizes ABCB9 and protects ABCB9 against lysosomal degradation. Interacts with FURIN. Interacts with TMEM175; inhibiting the proton channel activity of TMEM175. Post-translationally, O- and N-glycosylated; some of the N-glycans attached to LAMP-1 are polylactosaminoglycans.

The protein localises to the lysosome membrane. It localises to the endosome membrane. It is found in the late endosome membrane. Its subcellular location is the cell membrane. The protein resides in the cytolytic granule membrane. Its function is as follows. Lysosomal membrane glycoprotein which plays an important role in lysosome biogenesis, lysosomal pH regulation, autophagy and cholesterol homeostasis. Acts as an important regulator of lysosomal lumen pH regulation by acting as a direct inhibitor of the proton channel TMEM175, facilitating lysosomal acidification for optimal hydrolase activity. Also plays an important role in NK-cells cytotoxicity. Mechanistically, participates in cytotoxic granule movement to the cell surface and perforin trafficking to the lytic granule. In addition, protects NK-cells from degranulation-associated damage induced by their own cytotoxic granule content. Presents carbohydrate ligands to selectins. Also implicated in tumor cell metastasis. This is Lysosome-associated membrane glycoprotein 1 (Lamp1) from Mus musculus (Mouse).